A 308-amino-acid polypeptide reads, in one-letter code: Probable GTP 3',8-cyclase (308 aa).

Positions Arg4–Arg224 constitute a Radical SAM core domain. Arg13 serves as a coordination point for GTP. 3 residues coordinate [4Fe-4S] cluster: Cys20, Cys24, and Cys27. Residue Lys60 participates in GTP binding. Residue Gly64 participates in S-adenosyl-L-methionine binding. Thr90 is a GTP binding site. S-adenosyl-L-methionine is bound at residue Ser114. Residue Lys151 participates in GTP binding. The [4Fe-4S] cluster site is built by Cys245 and Cys248. Arg250–Arg252 contributes to the GTP binding site. Position 262 (Cys262) interacts with [4Fe-4S] cluster.

The protein belongs to the radical SAM superfamily. MoaA family. [4Fe-4S] cluster serves as cofactor.

The catalysed reaction is GTP + AH2 + S-adenosyl-L-methionine = (8S)-3',8-cyclo-7,8-dihydroguanosine 5'-triphosphate + 5'-deoxyadenosine + L-methionine + A + H(+). The protein operates within cofactor biosynthesis; molybdopterin biosynthesis. Functionally, catalyzes the cyclization of GTP to (8S)-3',8-cyclo-7,8-dihydroguanosine 5'-triphosphate. This is Probable GTP 3',8-cyclase from Saccharolobus islandicus (strain L.S.2.15 / Lassen #1) (Sulfolobus islandicus).